The primary structure comprises 1006 residues: Phosphatidylinositol 4,5-bisphosphate 5-phosphatase A (1006 aa).

A disordered region spans residues 1-416; that stretch reads MEGQSSRGSR…SSSPWSAQPT (416 aa). Polar residues predominate over residues 27-41; sequence VAQTGAPSKVDSSFQ. The residue at position 56 (Arg-56) is an Asymmetric dimethylarginine; alternate. Arg-56 bears the Omega-N-methylarginine; alternate mark. Omega-N-methylarginine is present on Arg-65. Residue Arg-76 is modified to Asymmetric dimethylarginine. Asymmetric dimethylarginine; alternate is present on Arg-83. Residue Arg-83 is modified to Omega-N-methylarginine; alternate. Residues 94-112 show a composition bias toward polar residues; it reads GQKTATAHRSSSLAPTSVG. The RSXSXX motif 1 motif lies at 102 to 107; the sequence is RSSSLA. The segment covering 180 to 193 has biased composition (low complexity); it reads LAASGLSLALASEE. Residues 196–209 are compositionally biased toward pro residues; sequence PELPSTPSPVPSPV. A compositionally biased stretch (low complexity) spans 210–234; sequence LSPTQEQALAPASTASGAASVGQTS. The span at 256–273 shows a compositional bias: polar residues; it reads PAQTSGPTGSPPCIQTSP. Residues Ser-291 and Ser-324 each carry the phosphoserine modification. Residues 337 to 347 are compositionally biased toward pro residues; the sequence is VPPPLPKPPRS. The short motif at 345–350 is the SH3-binding element; it reads PRSPSR. Low complexity-rich tracts occupy residues 348 to 360 and 398 to 409; these read PSRSPSHSPNRSP and TTSSSTSTLSSS. An RSXSXX motif 2 motif is present at residues 350 to 355; the sequence is RSPSHS. Residues 425–728 are catalytic; the sequence is ITVVTWNVGT…SDHKPVAAQF (304 aa). The required for ruffle localization stretch occupies residues 729–840; the sequence is LLQFAFRDDM…IGITEPFQIS (112 aa). A compositionally biased stretch (low complexity) spans 844-858; sequence SELASSSTDSSGTSS. Residues 844–1006 are disordered; sequence SELASSSTDS…RGLEEGGLGP (163 aa). Short sequence motifs (RSXSXX motif) lie at residues 874-879 and 885-890; these read RSPSPG and RSRSPG. Ser-903 is modified (phosphoserine). The RSXSXX motif 5 motif lies at 911 to 916; sequence RSPSPQ. Over residues 927-946 the composition is skewed to low complexity; sequence RSSNGSSRGSSEEGPSGLPG. The residue at position 990 (Ser-990) is a Phosphoserine.

Belongs to the inositol 1,4,5-trisphosphate 5-phosphatase type II family.

The protein resides in the cytoplasm. It carries out the reaction 1D-myo-inositol 1,4,5-trisphosphate + H2O = 1D-myo-inositol 1,4-bisphosphate + phosphate. The enzyme catalyses 1D-myo-inositol 1,3,4,5-tetrakisphosphate + H2O = 1D-myo-inositol 1,3,4-trisphosphate + phosphate. The catalysed reaction is a 1,2-diacyl-sn-glycero-3-phospho-(1D-myo-inositol-4,5-bisphosphate) + H2O = a 1,2-diacyl-sn-glycero-3-phospho-(1D-myo-inositol 4-phosphate) + phosphate. Inositol 5-phosphatase, which converts inositol 1,4,5-trisphosphate to inositol 1,4-bisphosphate. Also converts phosphatidylinositol 4,5-bisphosphate to phosphatidylinositol 4-phosphate and inositol 1,3,4,5-tetrakisphosphate to inositol 1,3,4-trisphosphate in vitro. May be involved in modulation of the function of inositol and phosphatidylinositol polyphosphate-binding proteins that are present at membranes ruffles. The chain is Phosphatidylinositol 4,5-bisphosphate 5-phosphatase A (INPP5J) from Homo sapiens (Human).